Here is a 1919-residue protein sequence, read N- to C-terminus: MILKSFLLGNLVSLCMKIINSVVVVGLYYGFLTTFSIGPSYLFLLRARVMEEGEEGTEKKVSATTGFITGQLMMFISIYYAPLHLALGRPHTITVLALPYLLFHFFWNNHKNFFDYGSTTRNSMRNLSIQCVFLNNLIFQLFNHFILPSSMLARLVNIYMFRCNNKMLFVTSSFVGWLIGHILFMKWVGLVLVWIRQNHSIRSNKYIRSNKYLVSELINSMARIFSILLFITCVYYLGRIPSPIITKKLKETPTTEERGESEEETDVEIETPTTEERGESEEETDVEIETPTTEERGESEEETDVEIETPTTEERGESEEETDVEIETASETKGAKQEQEGSTEEDPSPSLFSEEKEDPDKIDETEEIRVNGKEKTKDEFHFTETSYNNSPVYKVSYLYKNQENFNKIKILDKKDEDKGLFWFEKPLVTLLFDYKRWNRPLRYIKNNRFERTARNEMSQYFFYTCRSDGKERISFTYPPSLSTFGEMIQRRMSLPTLEKLSSDELYNHWIYTNKQKKNNLNNEFLNRIKALDMGFLSLDILEKSTRLYNDTKKDYLPKIYDPILNGSYRGTIKKKFSPSIRNKISLENFIETMEINKIHNLLLPDTDYQEFKQKIDPFDKKKRFSTEISHLFTLISKFDRESRSGLNLKGPSLFSENEAKLLKFLLNAIITIANGHKIKQKSFGIKEISKKVPRWSDKFITELEQQTGVIQEGVRVGHQIRSRKIDDIVVFTDNKWNSKNRDKIDLIYTIEYLQESDFRRNIIKGSMRTQRRKTIIWKLFEANAHSPLFLNRRKKSPLFSFDISELMKLIFRNWMGKGAELKDYTEEQTKRREKQEENNIKEKVRIELPEIWDLVPFSKTTRSLLLIIQSMLRKYIILPSLIIVKNIGRILLFQPPEWSEDFHEWKREKHIKCTYNGVQLSETELPANWLTEGIQIKILFPFCLKPWYRSKPKLRPSYRDLKKEQKKDDSCFLTASGMETDLPFGSPRKRTSFFEPIFKDFLALRVLIRRTKHFLQGSKETKRGFIKNVLFLFLKRIKKELSKVNPTLFRLKEVYESGETNQEKGSIISNQTIHNSFNKIRSTDNYSPREKKIKNLTDRTSPIRKKIKSITKEKKKGTPGIKSSPNKRSYNVESPKDIWQILKRRNTRLIWKLQVFLKIFIEKIYIDIFLYIINIARMYTRLVLESTKKIIQKYKYIYNNETNQETINKTNQNTIHFISTIKKSLYNIRNSKKNSHLFFDLSSLSQAYVFYKLSRTRVINLYKLRSVLEYHGTSFFLKTAIKDSFGTQGIFHSELEHTKFPSYGTNQWKNWLRGHYQYNLSQIRWSGLIPQKWRNTINQGRITQKKNLTKWDSKDRLLHYKKQNAFEVYSLPNPNKNENSQKYYRYDLLSYKSINYERKTDPYIIYGSPLQVNNNQRISYNYTTQKQKFFDILEDIPINNYLGKGDIMYMEKNPDRKYFDWKIINFFLREKVDIETWIKMDPNSNKNTKIESKNYQKIDKIHKNQIFYLTLYQDLEKNPLNQKKHLFGWMEMNQEILNRHISNLELWFFPEFVLLYNVYKKKPWIIPSKLLLLNLNRNENVSDNKNINGKQKWNFFRPSNEKKIFELKNRNQEEKEPADRGDLGSDAQNQGNRRFVLSNQQKDIEEDYAKLVLKRGKTKKQSKNKSNVKVELNALLKQHLLFQLRYDEGLKQRMINNLKVSCLLIGLKNPRNITVSSIQNREISLDIMLIRKSLTVRELMKRGVLIIEPIRLSVKKDGQFIMYQTIGISLIHKSKYQTNQRYREQRYIDKKKFDESTPRYQRRTGNRDKNHYDFLVPEKILSSRRRRELRILIHFNSRSRKGVDSNPVFCNKKNIKSRSPFLDESKRFDRDKNELIKLKFFLGPNYRLEDLACINRYWFDTNNGSNFSMLRIYPQLKIR.

The next 6 membrane-spanning stretches (helical) occupy residues 18–38, 67–87, 90–110, 127–147, 175–195, and 224–244; these read IINS…FSIG, FITG…HLAL, PHTI…WNNH, LSIQ…HFIL, VGWL…LVWI, and IFSI…PSPI. Disordered stretches follow at residues 250 to 375, 1107 to 1129, and 1606 to 1636; these read KETP…GKEK, IKSI…NKRS, and ELKN…RRFV. Composition is skewed to acidic residues over residues 259-269, 278-288, 297-307, 316-328, and 355-366; these read GESEEETDVEI, GESE…EIET, and EKEDPDKIDETE. Basic residues predominate over residues 1107-1117; the sequence is IKSITKEKKKG. Positions 1606 to 1623 are enriched in basic and acidic residues; that stretch reads ELKNRNQEEKEPADRGDL. A compositionally biased stretch (polar residues) spans 1626-1636; the sequence is DAQNQGNRRFV.

Belongs to the TIC214 family. Part of the Tic complex.

It is found in the plastid. The protein localises to the chloroplast inner membrane. Its function is as follows. Involved in protein precursor import into chloroplasts. May be part of an intermediate translocation complex acting as a protein-conducting channel at the inner envelope. This is Protein TIC 214 from Panax ginseng (Korean ginseng).